The sequence spans 235 residues: Pyridoxine 5'-phosphate synthase (235 aa).

Asn-6 is a binding site for 3-amino-2-oxopropyl phosphate. 8–9 is a binding site for 1-deoxy-D-xylulose 5-phosphate; sequence DH. A 3-amino-2-oxopropyl phosphate-binding site is contributed by Arg-17. The active-site Proton acceptor is His-42. 1-deoxy-D-xylulose 5-phosphate contacts are provided by Arg-44 and His-49. Catalysis depends on Glu-69, which acts as the Proton acceptor. Thr-99 is a binding site for 1-deoxy-D-xylulose 5-phosphate. The active-site Proton donor is His-189. 3-amino-2-oxopropyl phosphate contacts are provided by residues Gly-190 and 211-212; that span reads GH.

The protein belongs to the PNP synthase family. Homooctamer; tetramer of dimers.

It is found in the cytoplasm. It carries out the reaction 3-amino-2-oxopropyl phosphate + 1-deoxy-D-xylulose 5-phosphate = pyridoxine 5'-phosphate + phosphate + 2 H2O + H(+). Its pathway is cofactor biosynthesis; pyridoxine 5'-phosphate biosynthesis; pyridoxine 5'-phosphate from D-erythrose 4-phosphate: step 5/5. Its function is as follows. Catalyzes the complicated ring closure reaction between the two acyclic compounds 1-deoxy-D-xylulose-5-phosphate (DXP) and 3-amino-2-oxopropyl phosphate (1-amino-acetone-3-phosphate or AAP) to form pyridoxine 5'-phosphate (PNP) and inorganic phosphate. The chain is Pyridoxine 5'-phosphate synthase from Chlorobium phaeovibrioides (strain DSM 265 / 1930) (Prosthecochloris vibrioformis (strain DSM 265)).